We begin with the raw amino-acid sequence, 239 residues long: Small ribosomal subunit protein uS2 (239 aa).

It belongs to the universal ribosomal protein uS2 family.

This Francisella tularensis subsp. tularensis (strain WY96-3418) protein is Small ribosomal subunit protein uS2.